Here is a 231-residue protein sequence, read N- to C-terminus: Large ribosomal subunit protein uL1 (231 aa).

The protein belongs to the universal ribosomal protein uL1 family. As to quaternary structure, part of the 50S ribosomal subunit.

In terms of biological role, binds directly to 23S rRNA. The L1 stalk is quite mobile in the ribosome, and is involved in E site tRNA release. Protein L1 is also a translational repressor protein, it controls the translation of the L11 operon by binding to its mRNA. The polypeptide is Large ribosomal subunit protein uL1 (Halalkalibacterium halodurans (strain ATCC BAA-125 / DSM 18197 / FERM 7344 / JCM 9153 / C-125) (Bacillus halodurans)).